Consider the following 628-residue polypeptide: MTPRQVRHGLAVLQQHNLLFYHTDPGAEFASYEANPDNAYNLVRTGKILEMIDTSFGAPAKDVMQSLLLSGQTRVSDLVAAYKEKIEQGNQTESTVGDDNDFGIEANGVNGDSKADKKAGPLIKSTAHLNTIICRLVEAELIDVVHPKTFESSEDILKTVEKEVMQKHFPAGVKGNKAKVELQERIAEGLRKVRGESKSLKRKLEQNGSAAKRRKLLAGFGMANGAHDEDMDPALDPRQVIRINYEKCLVDLRNRRLVQYATDMTGETTAYVYGVLLKLLTKDLSRCRADLVMDAVGDKDEEDDKGPGSVTTDQILDNLKTSVDLSLGIGKAERGQVSSTAAEKIELYPPKKKVLIEEAEVDGEASADEDEGEDESSEESDYDSDYKASTTHGTNGVNGTNGTNGTKVKFDESAAPKERRMDRPAQLRQHLLMLAESTQHFVRHCGPNEWTVDFVPVMKSLREAELDSVIERTCGRQGLRLVRILRAKGKLDEKALPNVALMRKPELQQKMLEMQTAGFVSVQEVPRDLKADVKKSFFLWFCDMDSSLSRLLDTGYVTMVHCLQVLEALRRKERDVLETTKRTDVRGREKDTMRKSYYERYSRFLESERKLFAQVMRVDDLVSVLRDF.

Acidic residues predominate over residues 360–383 (EVDGEASADEDEGEDESSEESDYD). Positions 360-422 (EVDGEASADE…SAAPKERRMD (63 aa)) are disordered. Low complexity predominate over residues 390 to 406 (TTHGTNGVNGTNGTNGT). The segment covering 408–422 (VKFDESAAPKERRMD) has biased composition (basic and acidic residues). Positions 555–576 (GYVTMVHCLQVLEALRRKERDV) are leucine-zipper.

This sequence belongs to the RNA polymerase beta chain family. Component of the RNA polymerase III (Pol III) complex consisting of 17 subunits.

The protein localises to the nucleus. DNA-dependent RNA polymerase catalyzes the transcription of DNA into RNA using the four ribonucleoside triphosphates as substrates. Specific core component of RNA polymerase III which synthesizes small RNAs, such as 5S rRNA and tRNAs. This chain is DNA-directed RNA polymerase III subunit RPC3 (RPC82), found in Chaetomium globosum (strain ATCC 6205 / CBS 148.51 / DSM 1962 / NBRC 6347 / NRRL 1970) (Soil fungus).